The following is a 177-amino-acid chain: Large ribosomal subunit protein uL22 (177 aa).

A disordered region spans residues 118-177 (VESRPSREGRRGGAGESAGGARARRAQGSKAAAAKKAPASSSTKAATTTEASEEAKGGSQ). Basic and acidic residues predominate over residues 121 to 130 (RPSREGRRGG). Residues 145-167 (GSKAAAAKKAPASSSTKAATTTE) are compositionally biased toward low complexity.

This sequence belongs to the universal ribosomal protein uL22 family. Part of the 50S ribosomal subunit.

Functionally, this protein binds specifically to 23S rRNA; its binding is stimulated by other ribosomal proteins, e.g. L4, L17, and L20. It is important during the early stages of 50S assembly. It makes multiple contacts with different domains of the 23S rRNA in the assembled 50S subunit and ribosome. The globular domain of the protein is located near the polypeptide exit tunnel on the outside of the subunit, while an extended beta-hairpin is found that lines the wall of the exit tunnel in the center of the 70S ribosome. This is Large ribosomal subunit protein uL22 from Mycobacterium sp. (strain JLS).